Reading from the N-terminus, the 505-residue chain is MHTAKPVKRYFNLKSSRIGMNPQTKTFEGAINRLNSLQSNAKVLEVLRKRGKIPNDQSMVEMRHWLRCIGYQPSDLNRLNVIHVAGTKGKGSTCAFTSSILQQIQKSGERSIPKCIGMYTSPHLRSVCERIQLNGKPISQELFTKYFFDVWERLENAVGSDSEKPMYFRFLTLMAWHVFISENVDAAIIEVGIGGEYDSTNLIEKPYATAVTSLGLDHTSLLGNTIAEIAWQKAGIYKESAIALTCEQAPEAMNVLKNRAAERNTSLKVVIPPAELTPDMIGLSGVHQLGNTSLAVSLVQEFYEKAGCPFDRDPYQDPAILDGLKYVKWPGRCQIEEINNIKWCFDGAHTKESLEATGLWLASKKNLYEDADARILLFNQQSRDDPIALLRSFLKGLESSGTGISFTHVIFSTNVTWKDAGYNPELLSINTITDNKPVLHVQEDLCKWWKESKGTTSEATVAPTIQEAIETVMSIKQKSRNTFVCVTGSLHLTGGVFVVLDQAVF.

89–92 (GKGS) contributes to the ATP binding site. Positions 121, 190, and 218 each coordinate Mg(2+). Residues Arg-332 and Asp-346 each contribute to the ATP site.

Belongs to the folylpolyglutamate synthase family. A monovalent cation is required as a cofactor.

The protein localises to the mitochondrion inner membrane. The protein resides in the mitochondrion matrix. It localises to the cytoplasm. It catalyses the reaction (6S)-5,6,7,8-tetrahydrofolyl-(gamma-L-Glu)(n) + L-glutamate + ATP = (6S)-5,6,7,8-tetrahydrofolyl-(gamma-L-Glu)(n+1) + ADP + phosphate + H(+). Its pathway is cofactor biosynthesis; tetrahydrofolylpolyglutamate biosynthesis. In terms of biological role, catalyzes conversion of folates to polyglutamate derivatives allowing concentration of folate compounds in the cell and the intracellular retention of these cofactors, which are important substrates for most of the folate-dependent enzymes that are involved in one-carbon transfer reactions involved in purine, pyrimidine and amino acid synthesis. The sequence is that of Probable folylpolyglutamate synthase (met7) from Schizosaccharomyces pombe (strain 972 / ATCC 24843) (Fission yeast).